A 438-amino-acid chain; its full sequence is Enolase (438 aa).

Residues His-159 and Glu-168 each contribute to the substrate site. The Proton donor role is filled by Glu-211. Residues Asp-246, Glu-297, and Asp-322 each contribute to the Mg(2+) site. Glu-297 and Asp-322 together coordinate substrate. Residue Lys-347 is the Proton acceptor of the active site. Residues 374-377 (SHRS) and Lys-398 contribute to the substrate site.

Belongs to the enolase family. As to quaternary structure, homodimer. The cofactor is Mg(2+).

The protein resides in the cytoplasm. It carries out the reaction (2R)-2-phosphoglycerate = phosphoenolpyruvate + H2O. It participates in carbohydrate degradation; glycolysis; pyruvate from D-glyceraldehyde 3-phosphate: step 4/5. The polypeptide is Enolase (enoA) (Penicillium citrinum).